The chain runs to 956 residues: Phosphatidylinositol 4-kinase PIK1a (956 aa).

Residues 1–120 (MPVAPHELRD…QTVRKFINKL (120 aa)) form the PIK helical domain. The disordered stretch occupies residues 545–573 (SRDWAKSTPGSPVARSSQEDEKFYGNVSS). The region spanning 658–939 (EDWNEKKHRI…YLIEKSVGSM (282 aa)) is the PI3K/PI4K catalytic domain. A G-loop region spans residues 664–670 (KHRIRKS). The catalytic loop stretch occupies residues 805–813 (QIKDRHNGN). An activation loop region spans residues 824–848 (HIDFGFLLSNSPGSVGFEAAPFKLT).

Belongs to the PI3/PI4-kinase family. Type III PI4K subfamily.

Its subcellular location is the nucleus. It catalyses the reaction a 1,2-diacyl-sn-glycero-3-phospho-(1D-myo-inositol) + ATP = a 1,2-diacyl-sn-glycero-3-phospho-(1D-myo-inositol 4-phosphate) + ADP + H(+). Its function is as follows. Acts on phosphatidylinositol (PI) in the first committed step in the production of the second messenger inositol 1,4,5,-trisphosphate. In Candida albicans (strain SC5314 / ATCC MYA-2876) (Yeast), this protein is Phosphatidylinositol 4-kinase PIK1a (PIKA).